Consider the following 1022-residue polypeptide: D-2-hydroxyglutarate dehydrogenase (1022 aa).

Positions 53–286 constitute an FAD-binding PCMH-type domain; it reads YQLLPDAVLF…SEARLDITPL (234 aa). (R)-2-hydroxyglutarate-binding residues include arginine 407 and histidine 505. The region spanning 667–700 is the 4Fe-4S ferredoxin-type domain; sequence FSHEVKEAMSGCLACKACSTQCPIKIDVPAFRSR. Positions 678, 681, 684, and 688 each coordinate [4Fe-4S] cluster.

The protein in the N-terminal section; belongs to the FAD-binding oxidoreductase/transferase type 4 family. In terms of assembly, homotetramer. [4Fe-4S] cluster serves as cofactor. It depends on FAD as a cofactor.

The enzyme catalyses (R)-2-hydroxyglutarate + A = 2-oxoglutarate + AH2. With respect to regulation, activity is completely inhibited by the addition of 0.5 mM Mn(2+), Ni(2+), or Co(2+) and partially inhibited by 0.5 mM Zn(2+). Its function is as follows. Catalyzes the oxidation of D-2-hydroxyglutarate (D-2-HGA) to 2-oxoglutarate. Appears to be the only D2HGDH in P.ananatis, providing the way to recycle D-2-HGA produced during L-serine synthesis by SerA, by converting it back to 2-oxoglutarate. Is involved in the utilization of D-2-HGA, that can support the growth of P.ananatis as a sole carbon source, although it barely serves as a good substrate. The physiological molecule that functions as the primary electron acceptor during D-2-HGA oxidation by YdiJ in P.ananatis is unknown. Shows strict substrate specificity towards D-2-HGA, since it has no detectable activity on L-2-hydroxyglutarate, L-malate, D-malate, L-lactate, D-lactate, L-tartrate, D-tartrate, L-glycerate, D-glycerate, glutarate, or pyruvate. The protein is D-2-hydroxyglutarate dehydrogenase of Pantoea ananatis (strain AJ13355).